The chain runs to 249 residues: 5'-nucleotidase SurE (249 aa).

A divalent metal cation contacts are provided by Asp-8, Asp-9, Ser-39, and Asn-91.

Belongs to the SurE nucleotidase family. It depends on a divalent metal cation as a cofactor.

Its subcellular location is the cytoplasm. The enzyme catalyses a ribonucleoside 5'-phosphate + H2O = a ribonucleoside + phosphate. Functionally, nucleotidase that shows phosphatase activity on nucleoside 5'-monophosphates. This is 5'-nucleotidase SurE from Magnetococcus marinus (strain ATCC BAA-1437 / JCM 17883 / MC-1).